A 124-amino-acid polypeptide reads, in one-letter code: MADLNAIVEQLSGLTIMEAAELVKQLEEKWGVSAAAAPVMMAGGPAAAAAPVEEKTEFTVVLADAGANKINVIKEVRAITGLGLKEAKDLVEGAPKEVKAGVAKAEAEELKKKLEAAGAKVEVK.

It belongs to the bacterial ribosomal protein bL12 family. In terms of assembly, homodimer. Part of the ribosomal stalk of the 50S ribosomal subunit. Forms a multimeric L10(L12)X complex, where L10 forms an elongated spine to which 2 to 4 L12 dimers bind in a sequential fashion. Binds GTP-bound translation factors.

In terms of biological role, forms part of the ribosomal stalk which helps the ribosome interact with GTP-bound translation factors. Is thus essential for accurate translation. The protein is Large ribosomal subunit protein bL12 of Anaeromyxobacter dehalogenans (strain 2CP-C).